A 462-amino-acid polypeptide reads, in one-letter code: UDP-N-acetylmuramate--L-alanine ligase (462 aa).

Glycine 114 to threonine 120 is a binding site for ATP.

It belongs to the MurCDEF family.

Its subcellular location is the cytoplasm. It catalyses the reaction UDP-N-acetyl-alpha-D-muramate + L-alanine + ATP = UDP-N-acetyl-alpha-D-muramoyl-L-alanine + ADP + phosphate + H(+). It participates in cell wall biogenesis; peptidoglycan biosynthesis. In terms of biological role, cell wall formation. In Brachyspira hyodysenteriae (strain ATCC 49526 / WA1), this protein is UDP-N-acetylmuramate--L-alanine ligase.